The following is a 289-amino-acid chain: Alpha-soluble NSF attachment protein (289 aa).

The stretch at 112 to 145 (GKYYKEIAELYELEQNFEQAIIYFEKAADIYQSE) is one TPR repeat.

This sequence belongs to the SNAP family.

It localises to the membrane. Functionally, required for vesicular transport between the endoplasmic reticulum and the Golgi apparatus. This is Alpha-soluble NSF attachment protein from Vitis vinifera (Grape).